Here is a 198-residue protein sequence, read N- to C-terminus: uncharacterized protein (198 aa).

To A.aeolicus aq_1211 and aq_1583.

This is an uncharacterized protein from Aquifex aeolicus (strain VF5).